The primary structure comprises 398 residues: Transcription termination factor 1, mitochondrial (398 aa).

A mitochondrion-targeting transit peptide spans 1–57; the sequence is MQSLSLGQTSISKGLNYLTIMAPGNLWHMRNNFLFGSRCWMTRFSAENIFKSVSFRL. 5 interaction with DNA regions span residues 169–170, 246–250, 323–330, 354–357, and 383–390; these read RS, QSTKR, AEKKFNDK, SIST, and SKKRYEAK.

The protein belongs to the mTERF family. As to quaternary structure, monomer. Post-translationally, phosphoprotein with mostly four phosphate groups. While the DNA-binding activity is unaffected by the phosphorylation state, only the phosphorylated form of the protein is active for termination activity. Functioning seems to be regulated by phosphorylation.

It localises to the mitochondrion. Functionally, transcription termination factor. Binds to a 28 bp region within the tRNA(Leu(uur)) gene at a position immediately adjacent to and downstream of the 16S rRNA gene; this region comprises a tridecamer sequence critical for directing accurate termination. Binds DNA along the major grove and promotes DNA bending and partial unwinding. Promotes base flipping. Transcription termination activity appears to be polarized with highest specificity for transcripts initiated on the light strand. This is Transcription termination factor 1, mitochondrial (MTERF1) from Pongo abelii (Sumatran orangutan).